The following is a 261-amino-acid chain: Cytochrome c oxidase subunit 3 (261 aa).

Residues 1–15 (MTHQTHAYHMVNPSP) lie on the Mitochondrial matrix side of the membrane. The helical transmembrane segment at 16 to 34 (WPLTGALSALLMTSGLIMW) threads the bilayer. Over 35–40 (FHYNSM) the chain is Mitochondrial intermembrane. A helical transmembrane segment spans residues 41 to 66 (ALLTLGFTTNLLTMYQWWRDVIREGT). The Mitochondrial matrix portion of the chain corresponds to 67 to 72 (FQGHHT). Residues 73 to 105 (PIVQKGLRYGMVLFIVSEVFFFAGFFWAFYHSS) form a helical membrane-spanning segment. Over 106–128 (LAPTPELGGCWPPTGIIPLNPLE) the chain is Mitochondrial intermembrane. Residues 129–152 (VPLLNTSVLLASGVSITWAHHSLM) form a helical membrane-spanning segment. The Mitochondrial matrix portion of the chain corresponds to 153–155 (EGN). A helical membrane pass occupies residues 156 to 183 (RKHMLQALFITISLGVYFTLLQASEYYE). Residues 184–190 (TSFTISD) are Mitochondrial intermembrane-facing. The helical transmembrane segment at 191–223 (GVYGSTFFMATGFHGLHVIIGSTFLIVCFLRQL) threads the bilayer. At 224 to 232 (YYHFTSNHH) the chain is on the mitochondrial matrix side. The chain crosses the membrane as a helical span at residues 233–256 (FGFEAAAWYWHFVDVVWLFLYVSI). At 257–261 (YWWGS) the chain is on the mitochondrial intermembrane side.

This sequence belongs to the cytochrome c oxidase subunit 3 family. Component of the cytochrome c oxidase (complex IV, CIV), a multisubunit enzyme composed of 14 subunits. The complex is composed of a catalytic core of 3 subunits MT-CO1, MT-CO2 and MT-CO3, encoded in the mitochondrial DNA, and 11 supernumerary subunits COX4I, COX5A, COX5B, COX6A, COX6B, COX6C, COX7A, COX7B, COX7C, COX8 and NDUFA4, which are encoded in the nuclear genome. The complex exists as a monomer or a dimer and forms supercomplexes (SCs) in the inner mitochondrial membrane with NADH-ubiquinone oxidoreductase (complex I, CI) and ubiquinol-cytochrome c oxidoreductase (cytochrome b-c1 complex, complex III, CIII), resulting in different assemblies (supercomplex SCI(1)III(2)IV(1) and megacomplex MCI(2)III(2)IV(2)).

The protein localises to the mitochondrion inner membrane. The enzyme catalyses 4 Fe(II)-[cytochrome c] + O2 + 8 H(+)(in) = 4 Fe(III)-[cytochrome c] + 2 H2O + 4 H(+)(out). Its function is as follows. Component of the cytochrome c oxidase, the last enzyme in the mitochondrial electron transport chain which drives oxidative phosphorylation. The respiratory chain contains 3 multisubunit complexes succinate dehydrogenase (complex II, CII), ubiquinol-cytochrome c oxidoreductase (cytochrome b-c1 complex, complex III, CIII) and cytochrome c oxidase (complex IV, CIV), that cooperate to transfer electrons derived from NADH and succinate to molecular oxygen, creating an electrochemical gradient over the inner membrane that drives transmembrane transport and the ATP synthase. Cytochrome c oxidase is the component of the respiratory chain that catalyzes the reduction of oxygen to water. Electrons originating from reduced cytochrome c in the intermembrane space (IMS) are transferred via the dinuclear copper A center (CU(A)) of subunit 2 and heme A of subunit 1 to the active site in subunit 1, a binuclear center (BNC) formed by heme A3 and copper B (CU(B)). The BNC reduces molecular oxygen to 2 water molecules using 4 electrons from cytochrome c in the IMS and 4 protons from the mitochondrial matrix. The protein is Cytochrome c oxidase subunit 3 (MT-CO3) of Canis lupus familiaris (Dog).